Consider the following 830-residue polypeptide: Septin and tuftelin-interacting protein 1 homolog (830 aa).

A compositionally biased stretch (acidic residues) spans 1-17 (MEDDDGRESFEINDMDL). 2 disordered regions span residues 1-122 (MEDD…PKQN) and 196-244 (AYGK…KGSW). Positions 153–199 (NSNKIMKMMQAMGYKPGEGLGAQGQGIVEPVQAQLRKGRGAVGAYGK) constitute a G-patch domain.

It belongs to the TFP11/STIP family. As to quaternary structure, identified in the spliceosome C complex. Can assemble into large rod-like polymers. In terms of tissue distribution, detected in muscle cells from body, pharynx and vulva, in neurons from head and tail, in pharyngeal gland and in tail hypodermal cells.

The protein localises to the nucleus. In terms of biological role, may be involved in pre-mRNA splicing. Required for embryonic development and survival. This chain is Septin and tuftelin-interacting protein 1 homolog (stip-1), found in Caenorhabditis elegans.